Here is a 57-residue protein sequence, read N- to C-terminus: MKRQKRDRLERAQSQGYKAGLNGRSHDECPYQQTEVRSYWLGGWRDARNDKLSGLCK.

Residues 1 to 28 are disordered; it reads MKRQKRDRLERAQSQGYKAGLNGRSHDE.

The protein belongs to the ribosome modulation factor family.

It localises to the cytoplasm. During stationary phase, converts 70S ribosomes to an inactive dimeric form (100S ribosomes). In Vibrio cholerae serotype O1 (strain MJ-1236), this protein is Ribosome modulation factor.